The sequence spans 125 residues: Ribonuclease P protein component (125 aa).

The protein belongs to the RnpA family. Consists of a catalytic RNA component (M1 or rnpB) and a protein subunit.

The enzyme catalyses Endonucleolytic cleavage of RNA, removing 5'-extranucleotides from tRNA precursor.. Its function is as follows. RNaseP catalyzes the removal of the 5'-leader sequence from pre-tRNA to produce the mature 5'-terminus. It can also cleave other RNA substrates such as 4.5S RNA. The protein component plays an auxiliary but essential role in vivo by binding to the 5'-leader sequence and broadening the substrate specificity of the ribozyme. This Clostridium botulinum (strain Eklund 17B / Type B) protein is Ribonuclease P protein component.